Consider the following 392-residue polypeptide: Outer membrane protein assembly factor BamB (392 aa).

The N-terminal stretch at 1-19 (MQLRKLLLPGLLSVTLLSG) is a signal peptide. The N-palmitoyl cysteine moiety is linked to residue cysteine 20. Residue cysteine 20 is the site of S-diacylglycerol cysteine attachment.

The protein belongs to the BamB family. In terms of assembly, part of the Bam complex, which is composed of the outer membrane protein BamA, and four lipoproteins BamB, BamC, BamD and BamE.

It is found in the cell outer membrane. In terms of biological role, part of the outer membrane protein assembly complex, which is involved in assembly and insertion of beta-barrel proteins into the outer membrane. This Shigella dysenteriae serotype 1 (strain Sd197) protein is Outer membrane protein assembly factor BamB.